A 302-amino-acid chain; its full sequence is tRNA pseudouridine synthase B (302 aa).

The active-site Nucleophile is Asp45.

This sequence belongs to the pseudouridine synthase TruB family. Type 1 subfamily.

The catalysed reaction is uridine(55) in tRNA = pseudouridine(55) in tRNA. Its function is as follows. Responsible for synthesis of pseudouridine from uracil-55 in the psi GC loop of transfer RNAs. The protein is tRNA pseudouridine synthase B of Francisella tularensis subsp. tularensis (strain FSC 198).